Consider the following 128-residue polypeptide: MNVIVNTENAPKPIGPYSQAIKNENFLIISGQIPIDVKSGKIPNNISEQTYIVLKNIKSIIIASKYTIQDIIKITVFTTNLEKIHIINEIYEKFFIDNKSSFPTRSCIEVQKLPKNVKIEMEAMAFKK.

This sequence belongs to the RutC family.

This chain is RutC family protein BUsg_359, found in Buchnera aphidicola subsp. Schizaphis graminum (strain Sg).